A 249-amino-acid polypeptide reads, in one-letter code: AA9 family lytic polysaccharide monooxygenase cel61B (249 aa).

The N-terminal stretch at 1-19 is a signal peptide; that stretch reads MKSCAILAALGCLAGSVLG. His20 contributes to the Cu(2+) binding site. A glycan (N-linked (GlcNAc...) asparagine) is linked at Asn25. 2 disulfides stabilise this stretch: Cys78-Cys198 and Cys120-Cys124. His108 lines the Cu(2+) pocket. 2 residues coordinate O2: His184 and Gln193. Position 195 (Tyr195) interacts with Cu(2+).

It belongs to the polysaccharide monooxygenase AA9 family. As to quaternary structure, monomer. The cofactor is Cu(2+).

The protein resides in the secreted. The catalysed reaction is [(1-&gt;4)-beta-D-glucosyl]n+m + reduced acceptor + O2 = 4-dehydro-beta-D-glucosyl-[(1-&gt;4)-beta-D-glucosyl]n-1 + [(1-&gt;4)-beta-D-glucosyl]m + acceptor + H2O.. Its function is as follows. Lytic polysaccharide monooxygenase (LPMO) that depolymerizes crystalline and amorphous polysaccharides via the oxidation of scissile alpha- or beta-(1-4)-glycosidic bonds, yielding C1 or C4 oxidation products. Catalysis by LPMOs requires the reduction of the active-site copper from Cu(II) to Cu(I) by a reducing agent and H(2)O(2) or O(2) as a cosubstrate. The polypeptide is AA9 family lytic polysaccharide monooxygenase cel61B (Hypocrea jecorina (strain QM6a) (Trichoderma reesei)).